The chain runs to 254 residues: Hydroxyacylglutathione hydrolase (254 aa).

7 residues coordinate Zn(2+): H53, H55, D57, H58, H111, D128, and H166.

It belongs to the metallo-beta-lactamase superfamily. Glyoxalase II family. In terms of assembly, monomer. Zn(2+) serves as cofactor.

It carries out the reaction an S-(2-hydroxyacyl)glutathione + H2O = a 2-hydroxy carboxylate + glutathione + H(+). Its pathway is secondary metabolite metabolism; methylglyoxal degradation; (R)-lactate from methylglyoxal: step 2/2. Functionally, thiolesterase that catalyzes the hydrolysis of S-D-lactoyl-glutathione to form glutathione and D-lactic acid. The protein is Hydroxyacylglutathione hydrolase of Aeromonas hydrophila subsp. hydrophila (strain ATCC 7966 / DSM 30187 / BCRC 13018 / CCUG 14551 / JCM 1027 / KCTC 2358 / NCIMB 9240 / NCTC 8049).